Reading from the N-terminus, the 436-residue chain is UDP-N-acetylmuramate--L-alanine ligase (436 aa).

ATP is bound at residue 110–116; the sequence is GAHGKTS.

It belongs to the MurCDEF family.

It is found in the cytoplasm. It carries out the reaction UDP-N-acetyl-alpha-D-muramate + L-alanine + ATP = UDP-N-acetyl-alpha-D-muramoyl-L-alanine + ADP + phosphate + H(+). It functions in the pathway cell wall biogenesis; peptidoglycan biosynthesis. Its function is as follows. Cell wall formation. The polypeptide is UDP-N-acetylmuramate--L-alanine ligase (Lacticaseibacillus paracasei (strain ATCC 334 / BCRC 17002 / CCUG 31169 / CIP 107868 / KCTC 3260 / NRRL B-441) (Lactobacillus paracasei)).